The primary structure comprises 490 residues: Cytochrome P450 71B29 (490 aa).

A helical membrane pass occupies residues 1 to 21; it reads MAIILCFLILLPLILIFLKKL. A heme-binding site is contributed by C440.

This sequence belongs to the cytochrome P450 family. Heme is required as a cofactor.

Its subcellular location is the membrane. The chain is Cytochrome P450 71B29 (CYP71B29) from Arabidopsis thaliana (Mouse-ear cress).